The sequence spans 118 residues: Small ribosomal subunit protein uS13 (118 aa).

Residues 93–118 form a disordered region; it reads RGLPVRGQRTKTNARTRKGPRKPIRK.

This sequence belongs to the universal ribosomal protein uS13 family. As to quaternary structure, part of the 30S ribosomal subunit. Forms a loose heterodimer with protein S19. Forms two bridges to the 50S subunit in the 70S ribosome.

Functionally, located at the top of the head of the 30S subunit, it contacts several helices of the 16S rRNA. In the 70S ribosome it contacts the 23S rRNA (bridge B1a) and protein L5 of the 50S subunit (bridge B1b), connecting the 2 subunits; these bridges are implicated in subunit movement. Contacts the tRNAs in the A and P-sites. The sequence is that of Small ribosomal subunit protein uS13 from Pseudomonas fluorescens (strain Pf0-1).